Reading from the N-terminus, the 238-residue chain is Small ribosomal subunit protein uS2 (238 aa).

Belongs to the universal ribosomal protein uS2 family.

This chain is Small ribosomal subunit protein uS2, found in Actinobacillus pleuropneumoniae serotype 7 (strain AP76).